The primary structure comprises 205 residues: Dihydrofolate reductase (205 aa).

The 201-residue stretch at 1 to 201 folds into the DHFR domain; it reads MLALVVALAS…TSFKMFLYTK (201 aa). NADP(+) contacts are provided by residues A7 and 13 to 19; that span reads GIGNANA. 29-34 lines the substrate pocket; that stretch reads DMAWFR. 62–64 is an NADP(+) binding site; that stretch reads RRT. A substrate-binding site is contributed by R78. NADP(+) is bound by residues 84–86 and 118–125; these read SRG and GGRDVYSL.

It belongs to the dihydrofolate reductase family.

The enzyme catalyses (6S)-5,6,7,8-tetrahydrofolate + NADP(+) = 7,8-dihydrofolate + NADPH + H(+). It participates in cofactor biosynthesis; tetrahydrofolate biosynthesis; 5,6,7,8-tetrahydrofolate from 7,8-dihydrofolate: step 1/1. Functionally, key enzyme in folate metabolism. Catalyzes an essential reaction for de novo glycine and purine synthesis, and for DNA precursor synthesis. The sequence is that of Dihydrofolate reductase (DHFR-1) from Encephalitozoon cuniculi (strain GB-M1) (Microsporidian parasite).